The primary structure comprises 214 residues: CASP-like protein 3A1 (214 aa).

The Cytoplasmic portion of the chain corresponds to 1-49; the sequence is MTNGQKIEVAVQLPESKVAATENNETMSGPLVVGGGVAKPFGRKADVMH. A helical transmembrane segment spans residues 50–70; sequence VILRLLCTITSVTAVSFMVTA. Topologically, residues 71 to 96 are extracellular; it reads HQSSTVSIYGFMLPVRSKWSFSHSFE. A helical transmembrane segment spans residues 97-117; sequence YLVGVSAAVAAHSLLQLLISM. Over 118–132 the chain is Cytoplasmic; sequence SRLLRKSPVIPSRSH. The chain crosses the membrane as a helical span at residues 133 to 153; sequence AWLIFAGDQVFAYAMISAGAA. The Extracellular segment spans residues 154–182; the sequence is ASGVTNLNRTGIQHTALPNFCKPLNYFCN. Residue Asn-161 is glycosylated (N-linked (GlcNAc...) asparagine). A helical transmembrane segment spans residues 183 to 203; that stretch reads HVAVSIAFAFISCLLLAALAV. The Cytoplasmic portion of the chain corresponds to 204 to 214; sequence QEVIWLSKSKY.

The protein belongs to the Casparian strip membrane proteins (CASP) family. In terms of assembly, homodimer and heterodimers.

It is found in the cell membrane. This is CASP-like protein 3A1 from Ricinus communis (Castor bean).